A 250-amino-acid polypeptide reads, in one-letter code: MPKRDAPWLMAGTSKVSRSGNYSPSGGMGSKSNKANAWVNRPMYRKPRIYRMYKSPDVPKGCEGPCKVQSYEQRHDISHVGKVMCISDITRGNGITHRVGKRFCVKSVYILGKIWMDENIMLKNHTNSVIFWLVRDRRPYGTPMDFGQVFNMFDNEPSTATVKNDFRDRYQVMHRFNAKVSGGQYASNDQALVRRFWKVNNHVVYNHQEAGKYENHTENALLLYMACTHASNPVYATLKIRIYVYDSITN.

Positions 1 to 31 (MPKRDAPWLMAGTSKVSRSGNYSPSGGMGSK) are disordered. A Bipartite nuclear localization signal motif is present at residues 3-19 (KRDAPWLMAGTSKVSRS). Polar residues predominate over residues 14–31 (SKVSRSGNYSPSGGMGSK). Residues 34 to 48 (KANAWVNRPMYRKPR) carry the Nuclear localization signal motif. Residues 53-70 (YKSPDVPKGCEGPCKVQS) fold into a zinc finger. Positions 95 to 116 (ITHRVGKRFCVKSVYILGKIWM) match the Nuclear export signal motif. Residues 194–241 (RRFWKVNNHVVYNHQEAGKYENHTENALLLYMACTHASNPVYATLKIR) carry the Bipartite nuclear localization signal motif.

Belongs to the geminiviridae capsid protein family. Homomultimer. Binds to single-stranded and double-stranded viral DNA. Interacts (via nuclear localization signals) with host importin alpha-1a.

Its subcellular location is the virion. It localises to the host nucleus. Encapsidates the viral DNA into characteristic twinned ('geminate') particles. Binds the genomic viral ssDNA and shuttles it into and out of the cell nucleus. The CP of bipartite geminiviruses is not required for cell-to-cell or systemic movement. The polypeptide is Capsid protein (Bean golden yellow mosaic virus (isolate Puerto Rico) (BGYMV)).